Reading from the N-terminus, the 523-residue chain is Synaptotagmin-10 (523 aa).

Over 1–55 (MSFRKEDGVSSLCQKALHIITELCFAGQVEWDKCSGIFPADRSGQGGGGTDISVS) the chain is Vesicular. A cysteine motif region spans residues 13–35 (CQKALHIITELCFAGQVEWDKCS). A helical membrane pass occupies residues 56-76 (LLAVVVSFCGLALLVVSLFVF). At 77–523 (WKLCWPCWKS…CSSPRPPSTP (447 aa)) the chain is on the cytoplasmic side. Thr-136 carries the phosphothreonine modification. C2 domains lie at 231 to 352 (TCGK…TVWK) and 363 to 496 (DLGE…THWH). The Ca(2+) site is built by Asp-262, Asp-268, Asp-320, Phe-321, Asp-322, Ser-325, Asp-328, Asp-394, Asp-400, Asp-454, and Asp-456.

The protein belongs to the synaptotagmin family. In terms of assembly, homodimer; disulfide-linked via the cysteine motif. Can also form heterodimers with SYT3, SYT6, SYT7 and SYT9. Ca(2+) is required as a cofactor.

It localises to the cytoplasmic vesicle. The protein resides in the secretory vesicle membrane. Ca(2+) sensor specifically required for the Ca(2+)-dependent exocytosis of secretory vesicles containing IGF1 in neurons of the olfactory bulb. Exocytosis of IGF1 is required for sensory perception of smell. Not involved in Ca(2+)-dependent synaptic vesicle exocytosis. Acts through Ca(2+) and phospholipid binding to the C2 domain: Ca(2+) induces binding of the C2-domains to phospholipid membranes and to assembled SNARE-complexes; both actions contribute to triggering exocytosis. The protein is Synaptotagmin-10 (Syt10) of Rattus norvegicus (Rat).